The following is a 486-amino-acid chain: Probable glucan endo-1,3-beta-glucosidase eglC (486 aa).

Residues 1–18 (MQLTQLLALALSLATSEA) form the signal peptide. Asparagine 84 is a glycosylation site (N-linked (GlcNAc...) asparagine). Glutamate 128 functions as the Proton donor in the catalytic mechanism. Asparagine 183 carries an N-linked (GlcNAc...) asparagine glycan. The active-site Nucleophile is glutamate 239. Residues asparagine 315, asparagine 386, asparagine 396, and asparagine 404 are each glycosylated (N-linked (GlcNAc...) asparagine). A disordered region spans residues 330–458 (AAAGGVAGGS…SSGAASPSST (129 aa)). Low complexity-rich tracts occupy residues 341–404 (GSAS…HGSN) and 413–424 (SVSNVSPSKSSS). Polar residues predominate over residues 430–442 (AATSMGASPSSVG). Positions 445–458 (GPSKSSGAASPSST) are enriched in low complexity. Glycine 463 is lipidated: GPI-anchor amidated glycine. Positions 464 to 486 (AATSVSAPVVHVVLLALMMVIAA) are cleaved as a propeptide — removed in mature form.

Belongs to the glycosyl hydrolase 17 family. The GPI-anchor is attached to the protein in the endoplasmic reticulum and serves to target the protein to the cell surface. There, the glucosamine-inositol phospholipid moiety is cleaved off and the GPI-modified mannoprotein is covalently attached via its lipidless GPI glycan remnant to the 1,6-beta-glucan of the outer cell wall layer.

It is found in the cell membrane. It localises to the secreted. The protein localises to the cell wall. It catalyses the reaction Hydrolysis of (1-&gt;3)-beta-D-glucosidic linkages in (1-&gt;3)-beta-D-glucans.. Glucanases play a role in cell expansion during growth, in cell-cell fusion during mating, and in spore release during sporulation. This enzyme may be involved in beta-glucan degradation and also function biosynthetically as a transglycosylase. This is Probable glucan endo-1,3-beta-glucosidase eglC (eglC) from Aspergillus terreus (strain NIH 2624 / FGSC A1156).